Here is a 292-residue protein sequence, read N- to C-terminus: MTIIIDGKKIANDLCERLSQKIDILKREYNIFPCLKVILVGSNPASQVYVRNKQKKAESIGISSETIVLPDNISEDELIEKINELNEDPSVHGILVQLPLPNHISASRVINTVSVEKDVDGFHDENVGKLVKGEKNCLIPCTPKGSLHLIKSIEENLSGKNAVVIGRSNIVGKPMFYLLLQENCTVTILHSQSKDLAEYCSKADIVVAAVGKPNFVQADWIKKGAIVIDVGINSVNVGKLVGDVDFEGIKGKAKAMTPVPGGVGPMTIAFLMMNTVIAACLQKGVDASNFIS.

Residues 166–168, Ser191, and Ile232 contribute to the NADP(+) site; that span reads GRS.

It belongs to the tetrahydrofolate dehydrogenase/cyclohydrolase family. Homodimer.

The enzyme catalyses (6R)-5,10-methylene-5,6,7,8-tetrahydrofolate + NADP(+) = (6R)-5,10-methenyltetrahydrofolate + NADPH. It catalyses the reaction (6R)-5,10-methenyltetrahydrofolate + H2O = (6R)-10-formyltetrahydrofolate + H(+). It functions in the pathway one-carbon metabolism; tetrahydrofolate interconversion. Catalyzes the oxidation of 5,10-methylenetetrahydrofolate to 5,10-methenyltetrahydrofolate and then the hydrolysis of 5,10-methenyltetrahydrofolate to 10-formyltetrahydrofolate. The sequence is that of Bifunctional protein FolD from Wolbachia sp. subsp. Drosophila simulans (strain wRi).